The following is a 176-amino-acid chain: Japanin-like-RS (176 aa).

Positions 1–24 (MKVLLCLVCSFYIIVSSITTMTTG) are cleaved as a signal peptide. 2 cysteine pairs are disulfide-bonded: C52/C174 and C138/C162. N155 is a glycosylation site (N-linked (GlcNAc...) asparagine).

Belongs to the calycin superfamily. Lipocalin family. Homodimer; non-disulfide-linked. Each monomer accommodates one molecule of cholesterol in a pocket. As to expression, expressed in salivary glands.

The protein localises to the secreted. Functionally, salivary tick protein that modulates host immune response. This protein blocks dendritic cell (DC) differentiation from monocytes. In addition, it inhibits up-regulation of costimulatory molecules and pro-inflammatory cytokines in response to stimuli and promotes up-regulation of co-inhibitory molecules and the anti-inflammatory cytokine interleukin-10. It has a pocket to accomodate cholesterol, which may have immune-modulatory roles, either directly or through interactions with the host gut microbiota. The polypeptide is Japanin-like-RS (Rhipicephalus sanguineus (Brown dog tick)).